The sequence spans 425 residues: Enolase (425 aa).

Position 163 (Q163) interacts with (2R)-2-phosphoglycerate. E205 serves as the catalytic Proton donor. Mg(2+) is bound by residues D242, E285, and D312. Residues K337, R366, S367, and K388 each contribute to the (2R)-2-phosphoglycerate site. The Proton acceptor role is filled by K337.

It belongs to the enolase family. Requires Mg(2+) as cofactor.

It localises to the cytoplasm. It is found in the secreted. The protein resides in the cell surface. The catalysed reaction is (2R)-2-phosphoglycerate = phosphoenolpyruvate + H2O. The protein operates within carbohydrate degradation; glycolysis; pyruvate from D-glyceraldehyde 3-phosphate: step 4/5. Functionally, catalyzes the reversible conversion of 2-phosphoglycerate (2-PG) into phosphoenolpyruvate (PEP). It is essential for the degradation of carbohydrates via glycolysis. This is Enolase from Cereibacter sphaeroides (strain ATCC 17029 / ATH 2.4.9) (Rhodobacter sphaeroides).